Reading from the N-terminus, the 261-residue chain is MLLIPAIDLKDGHCVRLKQGDMDQATVFSEDPAEMARHWLLQGARRLHLVDLNGAFAGKPKNESAVKSILQAVREYAEKNGIEEIPVQLGGGIRDLDTIERYLDDGLSYIIIGTAAVKNPGFLHDACSAFPGQIIVGLDAKDGKVATDGWSKLSGHEVIDLAKKFEDYGCESIIYTDIGRDGMMGGVNIEATVKLAQSMTIPVIASGGVHNIKDVEALCAVQDEGIEGVICGRSIYEGTLDLRSAQDRADELTDEAPEADA.

The Proton acceptor role is filled by D8. Residue D139 is the Proton donor of the active site.

It belongs to the HisA/HisF family.

The protein localises to the cytoplasm. It catalyses the reaction 1-(5-phospho-beta-D-ribosyl)-5-[(5-phospho-beta-D-ribosylamino)methylideneamino]imidazole-4-carboxamide = 5-[(5-phospho-1-deoxy-D-ribulos-1-ylimino)methylamino]-1-(5-phospho-beta-D-ribosyl)imidazole-4-carboxamide. Its pathway is amino-acid biosynthesis; L-histidine biosynthesis; L-histidine from 5-phospho-alpha-D-ribose 1-diphosphate: step 4/9. The chain is 1-(5-phosphoribosyl)-5-[(5-phosphoribosylamino)methylideneamino] imidazole-4-carboxamide isomerase from Janthinobacterium sp. (strain Marseille) (Minibacterium massiliensis).